The primary structure comprises 344 residues: uncharacterized protein (344 aa).

It belongs to the glycosyltransferase 2 family.

This is an uncharacterized protein from Escherichia coli (strain K12).